The following is a 53-amino-acid chain: UPF0391 membrane protein Bcep18194_C7021 (53 aa).

A run of 2 helical transmembrane segments spans residues 5-25 and 30-50; these read AVIF…GIAA and IAKI…LLGV.

The protein belongs to the UPF0391 family.

The protein localises to the cell membrane. This is UPF0391 membrane protein Bcep18194_C7021 from Burkholderia lata (strain ATCC 17760 / DSM 23089 / LMG 22485 / NCIMB 9086 / R18194 / 383).